A 55-amino-acid chain; its full sequence is uncharacterized protein (55 aa).

The N-terminal stretch at 1–19 is a signal peptide; sequence MQILLVVRLVLLWLGGLSA.

This is an uncharacterized protein from Orgyia pseudotsugata multicapsid polyhedrosis virus (OpMNPV).